We begin with the raw amino-acid sequence, 150 residues long: Deoxyuridine 5'-triphosphate nucleotidohydrolase (150 aa).

Substrate contacts are provided by residues 69–71, asparagine 82, 86–88, and lysine 96; these read RSG and LID.

Belongs to the dUTPase family. It depends on Mg(2+) as a cofactor.

It carries out the reaction dUTP + H2O = dUMP + diphosphate + H(+). The protein operates within pyrimidine metabolism; dUMP biosynthesis; dUMP from dCTP (dUTP route): step 2/2. Functionally, this enzyme is involved in nucleotide metabolism: it produces dUMP, the immediate precursor of thymidine nucleotides and it decreases the intracellular concentration of dUTP so that uracil cannot be incorporated into DNA. The protein is Deoxyuridine 5'-triphosphate nucleotidohydrolase of Neisseria gonorrhoeae (strain ATCC 700825 / FA 1090).